Reading from the N-terminus, the 287-residue chain is Festuclavine synthase I (287 aa).

This sequence belongs to the fgaFS/easG family.

It carries out the reaction festuclavine + NAD(+) = 6,8-dimethyl-6,7-didehydroergoline + NADH + H(+). Its pathway is alkaloid biosynthesis; ergot alkaloid biosynthesis. In terms of biological role, festuclavine synthase; part of the gene cluster that mediates the biosynthesis of isofumigaclavines, fungal ergot alkaloids. The tryptophan dimethylallyltransferase ifgA catalyzes the first step of ergot alkaloid biosynthesis by condensing dimethylallyl diphosphate (DMAP) and tryptophan to form 4-dimethylallyl-L-tryptophan. The second step is catalyzed by the methyltransferase ifgB that methylates 4-dimethylallyl-L-tryptophan in the presence of S-adenosyl-L-methionine, resulting in the formation of N-methyl-dimethylallyl-L-tryptophan. The catalase ifgD and the FAD-dependent oxidoreductase ifgC then transform N-methyl-dimethylallyl-L-tryptophan to chanoclavine-I which is further oxidized by ifgE in the presence of NAD(+), resulting in the formation of chanoclavine-I aldehyde. The chanoclavine-I aldehyde reductases ifgG and/or fgaOx3 reduce chanoclavine-I aldehyde to dihydrochanoclavine-I aldehyde that spontaneously dehydrates to form 6,8-dimethyl-6,7-didehydroergoline. The festuclavine dehydrogenases ifgF1 and/or ifgF2 then catalyze the reduction of 6,8-dimethyl-6,7-didehydroergoline to form festuclavine. Hydrolysis of festuclavine by a yet undetermined cytochrome P450 monooxygenase (called ifgH) then leads to the formation of isofumigaclavine B which is in turn acetylated by ifgI to isofumigaclavine A. Penicillium roqueforti has interestingly at least two sets of genes for the consumption of chanoclavine-I aldehyde on three different loci, the OYEs ifgG/fgaOx3 and the festuclavine synthase homologs ifgF1/ifgF2. The reason for the duplication of these genes is unclear, probably to ensure the conversion of chanoclavine-I aldehyde by differential gene expression under various environmental conditions. This is Festuclavine synthase I from Penicillium roqueforti (strain FM164).